Reading from the N-terminus, the 427-residue chain is ATP-sensitive inward rectifier potassium channel 12 (427 aa).

Topologically, residues methionine 1 to aspartate 77 are cytoplasmic. Cysteine 75 carries the post-translational modification S-nitrosocysteine. The helical transmembrane segment at isoleucine 78–valine 104 threads the bilayer. Arginine 79 and arginine 81 together coordinate a 1,2-diacyl-sn-glycero-3-phospho-(1D-myo-inositol-4,5-bisphosphate). Residues isoleucine 105 to glycine 129 are Extracellular-facing. A disulfide bridge links cysteine 123 with cysteine 155. An intramembrane region (helical; Pore-forming) is located at residues phenylalanine 130 to tyrosine 146. K(+)-binding residues include threonine 143, isoleucine 144, glycine 145, and tyrosine 146. A Selectivity filter motif is present at residues threonine 143–leucine 148. The Extracellular portion of the chain corresponds to glycine 147 to cysteine 155. The chain crosses the membrane as a helical span at residues proline 156–lysine 183. Positions 183 and 188 each coordinate a 1,2-diacyl-sn-glycero-3-phospho-(1D-myo-inositol-4,5-bisphosphate). At methionine 184–isoleucine 427 the chain is on the cytoplasmic side. Residues aspartate 387 to isoleucine 427 are disordered. Basic and acidic residues predominate over residues alanine 393–arginine 409. A PDZ-binding motif is present at residues serine 425–isoleucine 427.

This sequence belongs to the inward rectifier-type potassium channel (TC 1.A.2.1) family. KCNJ12 subfamily. Homotetramer. Forms heteromer with KCNJ4. Can form heteromeric channels with Kir2.6/KCNJ18. Association, via its PDZ-recognition domain, with LIN7A, LIN7B, LIN7C, DLG1, CASK and APBA1 plays a key role in its localization and trafficking. As to expression, highest level in cerebellum. Moderately found in kidney, forebrain and skeletal muscle. Not detected in uterus, liver and pancreas.

It is found in the membrane. It localises to the cell membrane. Its subcellular location is the sarcolemma. The protein resides in the T-tubule. The enzyme catalyses K(+)(in) = K(+)(out). Activated by phosphatidylinositol 4,5-biphosphate (PtdIns(4,5)P2). PtdIns(4,5)P2 binding to the cytoplasmic side of the channel triggers a conformation change leading to channel opening. Inhibited by Ba(2+). In terms of biological role, inward rectifying potassium channel that probably participates in controlling the resting membrane potential in electrically excitable cells. It probably participates in establishing action potential waveform and excitability of neuronal and muscle tissues. Inward rectifier potassium channels are characterized by a greater tendency to allow potassium to flow into the cell rather than out of it. Their voltage dependence is regulated by the concentration of extracellular potassium; as external potassium is raised, the voltage range of the channel opening shifts to more positive voltages. The inward rectification is mainly due to the blockage of outward current by internal magnesium. This Rattus norvegicus (Rat) protein is ATP-sensitive inward rectifier potassium channel 12 (Kcnj12).